The sequence spans 239 residues: MSRAPFIVPALKKHTATVIMAHGLGDSGAGWVSLAHNWRRRGLFEEVTFIFPNAPMIPITVNFGMSMPGWYDITKLGRDLDFQEAVKNQDEAGILKSRDYFNSLIKEQMDQGIKPSRIVLGGFSQGGAMSLFSGITGQEKLGGVFGLSCYMLLSDRIKNYIPENFPNKKTPFFLAHGTEDDIVPHEFGKRSAEMAKELGLEDVTFNSYKYLSHSADPVEIEDLEKFLDRVIPAENGGSL.

Residues Ser124, Asp180, and His213 each act as charge relay system in the active site.

It belongs to the AB hydrolase superfamily. AB hydrolase 2 family.

The protein resides in the cytoplasm. It localises to the nucleus. It carries out the reaction S-hexadecanoyl-L-cysteinyl-[protein] + H2O = L-cysteinyl-[protein] + hexadecanoate + H(+). In terms of biological role, hydrolyzes fatty acids from S-acylated cysteine residues in proteins with a strong preference for palmitoylated G-alpha proteins over other acyl substrates. Mediates the deacylation of G-alpha proteins such as GPA1 in vivo, but has weak or no activity toward palmitoylated Ras proteins. Has weak lysophospholipase activity in vitro; however such activity may not exist in vivo. This Emericella nidulans (strain FGSC A4 / ATCC 38163 / CBS 112.46 / NRRL 194 / M139) (Aspergillus nidulans) protein is Acyl-protein thioesterase 1.